The sequence spans 198 residues: Recombination protein RecR (198 aa).

The C4-type zinc finger occupies 57–72 (CSECGHITEQDPCYIC). Residues 80–175 (SVICVVEDDK…TVTRLAQGLS (96 aa)) enclose the Toprim domain.

Belongs to the RecR family.

In terms of biological role, may play a role in DNA repair. It seems to be involved in an RecBC-independent recombinational process of DNA repair. It may act with RecF and RecO. In Staphylococcus saprophyticus subsp. saprophyticus (strain ATCC 15305 / DSM 20229 / NCIMB 8711 / NCTC 7292 / S-41), this protein is Recombination protein RecR.